Reading from the N-terminus, the 427-residue chain is Ectonucleoside triphosphate diphosphohydrolase 5 (427 aa).

Residues 1 to 24 form the signal peptide; sequence MATSWGAVFMLIIACVGSTVFYRE. Glu-171 functions as the Proton acceptor in the catalytic mechanism. Asn-231 is a glycosylation site (N-linked (GlcNAc...) asparagine). 2 disulfide bridges follow: Cys-271–Cys-302 and Cys-362–Cys-376.

The protein belongs to the GDA1/CD39 NTPase family. As to quaternary structure, monomer; active form. Homodimer; disulfide-linked. Homodimers are enzymatically inactive. Ca(2+) is required as a cofactor. It depends on Mg(2+) as a cofactor. Post-translationally, N-glycosylated; high-mannose type. In terms of tissue distribution, ubiquitous.

It localises to the endoplasmic reticulum. Its subcellular location is the secreted. The catalysed reaction is a ribonucleoside 5'-diphosphate + H2O = a ribonucleoside 5'-phosphate + phosphate + H(+). The enzyme catalyses GDP + H2O = GMP + phosphate + H(+). It catalyses the reaction UDP + H2O = UMP + phosphate + H(+). It carries out the reaction IDP + H2O = IMP + phosphate + H(+). The catalysed reaction is CDP + H2O = CMP + phosphate + H(+). The enzyme catalyses ADP + H2O = AMP + phosphate + H(+). The protein operates within protein modification; protein glycosylation. Its function is as follows. Hydrolyzes nucleoside diphosphates with a preference for GDP, IDP and UDP compared to ADP and CDP. In the lumen of the endoplasmic reticulum, hydrolyzes UDP that acts as an end-product feedback inhibitor of the UDP-Glc:glycoprotein glucosyltransferases. UMP can be transported back by an UDP-sugar antiporter to the cytosol where it is consumed to regenerate UDP-glucose. Therefore, it positively regulates protein reglucosylation by clearing UDP from the ER lumen and by promoting the regeneration of UDP-glucose. Protein reglucosylation is essential to proper glycoprotein folding and quality control in the ER. In Mus musculus (Mouse), this protein is Ectonucleoside triphosphate diphosphohydrolase 5 (Entpd5).